The sequence spans 53 residues: Rho GTPase-activating protein 6 (53 aa).

It is found in the cytoplasm. Its function is as follows. GTPase activator for the Rho-type GTPases by converting them to an inactive GDP-bound state. Could regulate the interactions of signaling molecules with the actin cytoskeleton. Promotes continuous elongation of cytoplasmic processes during cell motility and simultaneous retraction of the cell body changing the cell morphology. The chain is Rho GTPase-activating protein 6 (arhgap6) from Takifugu rubripes (Japanese pufferfish).